We begin with the raw amino-acid sequence, 295 residues long: Ribosomal RNA small subunit methyltransferase A (295 aa).

Residues asparagine 29, leucine 31, glycine 56, glutamate 77, aspartate 102, and asparagine 128 each contribute to the S-adenosyl-L-methionine site.

It belongs to the class I-like SAM-binding methyltransferase superfamily. rRNA adenine N(6)-methyltransferase family. RsmA subfamily.

Its subcellular location is the cytoplasm. The catalysed reaction is adenosine(1518)/adenosine(1519) in 16S rRNA + 4 S-adenosyl-L-methionine = N(6)-dimethyladenosine(1518)/N(6)-dimethyladenosine(1519) in 16S rRNA + 4 S-adenosyl-L-homocysteine + 4 H(+). In terms of biological role, specifically dimethylates two adjacent adenosines (A1518 and A1519) in the loop of a conserved hairpin near the 3'-end of 16S rRNA in the 30S particle. May play a critical role in biogenesis of 30S subunits. This is Ribosomal RNA small subunit methyltransferase A from Listeria monocytogenes serovar 1/2a (strain ATCC BAA-679 / EGD-e).